The primary structure comprises 87 residues: Small ribosomal subunit protein bS20 (87 aa).

Over residues 1–11 (MANHKSALKRI) the composition is skewed to basic residues. A disordered region spans residues 1–23 (MANHKSALKRIKQTEKRTERNRH).

The protein belongs to the bacterial ribosomal protein bS20 family.

Functionally, binds directly to 16S ribosomal RNA. The protein is Small ribosomal subunit protein bS20 of Geotalea uraniireducens (strain Rf4) (Geobacter uraniireducens).